An 821-amino-acid polypeptide reads, in one-letter code: Maternal DNA replication licensing factor mcm6 (821 aa).

The C4-type zinc-finger motif lies at 159-186 (CMDCQSVVKDVEQQFRYTQPTICKNPVC). Positions 347–554 (LYHNLCTSLF…TDYAIARRIV (208 aa)) constitute an MCM domain. Residue 397–404 (GDPSTSKS) participates in ATP binding. Positions 529–532 (SRFD) match the Arginine finger motif.

Belongs to the MCM family. As to quaternary structure, component of the mcm2-7 complex (RLF-M). The complex forms a toroidal hexameric ring with the proposed subunit order mcm2-mcm6-mcm4-mcm7-mcm3-mcm5. The heterodimer of mmcm3/mcm5 interacts with mcm4, mmcm6, mcm7 and weakly with mcm2. Component of the CMG helicase complex, composed of the mcm2-7 complex, the GINS complex and cdc45.

The protein localises to the nucleus. It is found in the chromosome. It carries out the reaction ATP + H2O = ADP + phosphate + H(+). Functionally, acts as a component of the mcm2-7 complex (mcm complex) which is the putative replicative helicase essential for 'once per cell cycle' DNA replication initiation and elongation in eukaryotic cells. The active ATPase sites in the mcm2-7 ring are formed through the interaction surfaces of two neighboring subunits such that a critical structure of a conserved arginine finger motif is provided in trans relative to the ATP-binding site of the Walker A box of the adjacent subunit. The six ATPase active sites, however, are likely to contribute differentially to the complex helicase activity. The existence of maternal and zygotic forms of mcm3 and mcm6 suggests that specific forms of mcm2-7 complexes may be used during different stages of development. The sequence is that of Maternal DNA replication licensing factor mcm6 from Xenopus tropicalis (Western clawed frog).